The chain runs to 458 residues: Light-independent protochlorophyllide reductase subunit N (458 aa).

Residues cysteine 22, cysteine 47, and cysteine 107 each contribute to the [4Fe-4S] cluster site.

This sequence belongs to the BchN/ChlN family. In terms of assembly, protochlorophyllide reductase is composed of three subunits; ChlL, ChlN and ChlB. Forms a heterotetramer of two ChlB and two ChlN subunits. [4Fe-4S] cluster is required as a cofactor.

The protein localises to the plastid. It localises to the chloroplast. It catalyses the reaction chlorophyllide a + oxidized 2[4Fe-4S]-[ferredoxin] + 2 ADP + 2 phosphate = protochlorophyllide a + reduced 2[4Fe-4S]-[ferredoxin] + 2 ATP + 2 H2O. It participates in porphyrin-containing compound metabolism; chlorophyll biosynthesis (light-independent). Its function is as follows. Component of the dark-operative protochlorophyllide reductase (DPOR) that uses Mg-ATP and reduced ferredoxin to reduce ring D of protochlorophyllide (Pchlide) to form chlorophyllide a (Chlide). This reaction is light-independent. The NB-protein (ChlN-ChlB) is the catalytic component of the complex. This is Light-independent protochlorophyllide reductase subunit N from Chaetosphaeridium globosum (Charophycean green alga).